A 1082-amino-acid chain; its full sequence is Protein argonaute 1A (1082 aa).

Disordered stretches follow at residues 17–148 (MMRK…ASQD) and 187–208 (GQSP…VRFP). Residues 29 to 38 (GESSGTQQAT) show a composition bias toward polar residues. Positions 72–100 (GRGGGQHQGRGGRYQGRGGPTSHQPGGGP) are enriched in gly residues. Residues 420 to 533 (PVIDFVAQLL…LPMEVCKIVE (114 aa)) form the PAZ domain. The Piwi domain maps to 709–1030 (LLIAILPDNN…AAFRARFYME (322 aa)). Residues 1036-1065 (SGSMASGAHTRGGGPLPGARSTKPAGNVAV) form a disordered region.

Belongs to the argonaute family. Ago subfamily.

In terms of biological role, probably involved in the RNA silencing pathway. May bind to short RNAs such as microRNAs (miRNAs) or short interfering RNAs (siRNAs), and represses the translation of mRNAs which are complementary to them. The chain is Protein argonaute 1A (AGO1A) from Oryza sativa subsp. japonica (Rice).